The following is an 80-amino-acid chain: Putative membrane protein insertion efficiency factor (80 aa).

It belongs to the UPF0161 family.

The protein resides in the cell inner membrane. Its function is as follows. Could be involved in insertion of integral membrane proteins into the membrane. This is Putative membrane protein insertion efficiency factor from Kosmotoga olearia (strain ATCC BAA-1733 / DSM 21960 / TBF 19.5.1).